Consider the following 244-residue polypeptide: tRNA pseudouridine synthase A (244 aa).

Residue Asp52 is the Nucleophile of the active site. Tyr110 is a binding site for substrate.

The protein belongs to the tRNA pseudouridine synthase TruA family. Homodimer.

It catalyses the reaction uridine(38/39/40) in tRNA = pseudouridine(38/39/40) in tRNA. Functionally, formation of pseudouridine at positions 38, 39 and 40 in the anticodon stem and loop of transfer RNAs. The polypeptide is tRNA pseudouridine synthase A (Caldicellulosiruptor bescii (strain ATCC BAA-1888 / DSM 6725 / KCTC 15123 / Z-1320) (Anaerocellum thermophilum)).